A 44-amino-acid chain; its full sequence is Cytochrome b559 subunit beta (44 aa).

A helical membrane pass occupies residues 17–41 (VRWLAVHTLAVPSVFFVGAIAAMQF). Residues Arg18 and His23 each coordinate heme.

Belongs to the PsbE/PsbF family. In terms of assembly, heterodimer of an alpha subunit and a beta subunit. PSII is composed of 1 copy each of membrane proteins PsbA, PsbB, PsbC, PsbD, PsbE, PsbF, PsbH, PsbI, PsbJ, PsbK, PsbL, PsbM, PsbT, PsbX, PsbY, PsbZ, Psb30/Ycf12, peripheral proteins PsbO, CyanoQ (PsbQ), PsbU, PsbV and a large number of cofactors. It forms dimeric complexes. The cofactor is heme b.

It localises to the cellular thylakoid membrane. This b-type cytochrome is tightly associated with the reaction center of photosystem II (PSII). PSII is a light-driven water:plastoquinone oxidoreductase that uses light energy to abstract electrons from H(2)O, generating O(2) and a proton gradient subsequently used for ATP formation. It consists of a core antenna complex that captures photons, and an electron transfer chain that converts photonic excitation into a charge separation. The polypeptide is Cytochrome b559 subunit beta (Synechocystis sp. (strain ATCC 27184 / PCC 6803 / Kazusa)).